Consider the following 139-residue polypeptide: Actin-depolymerizing factor 4 (139 aa).

The ADF-H domain occupies 5–139 (SSGVAIHDDC…SLDALKDRVK (135 aa)).

This sequence belongs to the actin-binding proteins ADF family. In terms of assembly, interacts with LECRK1 (via kinase domain).

It localises to the cytoplasm. It is found in the cytoskeleton. In terms of biological role, actin-depolymerizing protein. Severs actin filaments (F-actin) and binds to actin monomers. Involved in innate immunity. Required for the expression of defense-related genes PR1A, LOX2 and CHS1 upon biotic stresses. Required for basal resistance to the fungal blast (Magnaporthe grisea), bacterial blight (Xanthomonas oryzae pv. oryzae, Xoo) and the herbivorous insect brown planthopper (Nilaparvata lugens, BPH). Involved in the promotion of seed germination. Required for the expression of alpha-amylase genes during seed germination. In Oryza sativa subsp. japonica (Rice), this protein is Actin-depolymerizing factor 4 (ADF4).